A 361-amino-acid chain; its full sequence is Thermostable alkaline protease (361 aa).

A signal peptide spans M1–A24. The propeptide occupies S25–S93. Residue Q94 participates in Ca(2+) binding. Positions P97 to T360 constitute a Peptidase S8 domain. The Charge relay system role is filled by D124. D132 lines the Ca(2+) pocket. The active-site Charge relay system is H154. Ca(2+)-binding residues include L165, N167, I169, V171, A255, Y257, and V260. Residue S307 is the Charge relay system of the active site.

The protein belongs to the peptidase S8 family. It depends on Ca(2+) as a cofactor.

It is found in the secreted. Shows keratinolytic activity. In Halalkalibacterium halodurans (strain ATCC BAA-125 / DSM 18197 / FERM 7344 / JCM 9153 / C-125) (Bacillus halodurans), this protein is Thermostable alkaline protease.